Here is a 228-residue protein sequence, read N- to C-terminus: Uracil-DNA glycosylase (228 aa).

Residue D65 is the Proton acceptor of the active site.

Belongs to the uracil-DNA glycosylase (UDG) superfamily. UNG family.

The protein localises to the cytoplasm. The enzyme catalyses Hydrolyzes single-stranded DNA or mismatched double-stranded DNA and polynucleotides, releasing free uracil.. In terms of biological role, excises uracil residues from the DNA which can arise as a result of misincorporation of dUMP residues by DNA polymerase or due to deamination of cytosine. This Lacticaseibacillus paracasei (strain ATCC 334 / BCRC 17002 / CCUG 31169 / CIP 107868 / KCTC 3260 / NRRL B-441) (Lactobacillus paracasei) protein is Uracil-DNA glycosylase.